The chain runs to 228 residues: Lipoprotein-releasing system ATP-binding protein LolD (228 aa).

In terms of domain architecture, ABC transporter spans 5–228 (FALSAISKSF…SGTLQNYTDY (224 aa)). ATP is bound at residue 40 to 47 (GPSGSGKS).

Belongs to the ABC transporter superfamily. Lipoprotein translocase (TC 3.A.1.125) family. The complex is composed of two ATP-binding proteins (LolD) and two transmembrane proteins (LolC and LolE).

It is found in the cell inner membrane. In terms of biological role, part of the ABC transporter complex LolCDE involved in the translocation of mature outer membrane-directed lipoproteins, from the inner membrane to the periplasmic chaperone, LolA. Responsible for the formation of the LolA-lipoprotein complex in an ATP-dependent manner. This chain is Lipoprotein-releasing system ATP-binding protein LolD, found in Ehrlichia ruminantium (strain Gardel).